Consider the following 500-residue polypeptide: Endonuclease domain-containing 1 protein (500 aa).

Residues 1–21 (MGTARWLALGSLFALAGLLEG) form the signal peptide. The segment at 293-323 (ERMVQSQKSSSPLSSTRSKRSTLLPPEASEG) is disordered. Over residues 297-317 (QSQKSSSPLSSTRSKRSTLLP) the composition is skewed to low complexity. Residue Lys407 is modified to N6-acetyllysine.

It belongs to the DNA/RNA non-specific endonuclease family. Interacts with RNF26; this interaction is important to modulate innate immune signaling through the cGAS-STING pathway.

The protein localises to the secreted. Functionally, may act as a DNase and a RNase. Plays a role in the modulation of innate immune signaling through the cGAS-STING pathway by interacting with RNF26. The polypeptide is Endonuclease domain-containing 1 protein (ENDOD1) (Homo sapiens (Human)).